A 228-amino-acid polypeptide reads, in one-letter code: Thrombin-like enzyme gyroxin analog (228 aa).

Positions 1–222 constitute a Peptidase S1 domain; that stretch reads VIGGDECNIN…YLDWIQSVIA (222 aa). Cystine bridges form between Cys-7–Cys-138, Cys-28–Cys-44, Cys-78–Cys-227, Cys-117–Cys-183, Cys-149–Cys-162, and Cys-173–Cys-198. Residue His-43 is the Charge relay system of the active site. N-linked (GlcNAc...) asparagine glycans are attached at residues Asn-45 and Asn-81. Residue Asp-88 is the Charge relay system of the active site. The N-linked (GlcNAc...) asparagine glycan is linked to Asn-145. Ser-177 functions as the Charge relay system in the catalytic mechanism. The N-linked (GlcNAc...) asparagine glycan is linked to Asn-224.

Belongs to the peptidase S1 family. Snake venom subfamily. As to quaternary structure, monomer. Expressed by the venom gland.

It localises to the secreted. The catalysed reaction is Selective cleavage of Arg-|-Xaa bond in fibrinogen, to form fibrin, and release fibrinopeptide A. The specificity of further degradation of fibrinogen varies with species origin of the enzyme.. Its activity is regulated as follows. Inhibited competitively by amidines and guanidines, and irreversibly inhibited by diisopropylfluorophosphate. Its function is as follows. Thrombin-like snake venom serine protease, that cleaves alpha-chain of fibrinogen (FGA) releases only fibrinopeptide A. Shows coagulant, esterase and amidase activities. Induces the barrel rotation syndrome in mice, which is manifested by gyroxin-like, rapid rolling motions. May also reversibly increase the permeability of the blood brain barrier (BBB) in mice. The polypeptide is Thrombin-like enzyme gyroxin analog (Lachesis muta muta (Bushmaster)).